The chain runs to 647 residues: Protein cueball (647 aa).

An N-terminal signal peptide occupies residues 1–22; it reads MLWCPSVLVPLIAVAACLPVLA. The Extracellular portion of the chain corresponds to 23 to 534; sequence IGTPLEWEFA…CMTPSPWTSN (512 aa). N-linked (GlcNAc...) asparagine glycans are attached at residues Asn80 and Asn106. LDL-receptor class B repeat units lie at residues 119–166, 167–211, and 212–257; these read RNLF…DVCR, RKLY…DQLS, and DRIF…TNDA. An N-linked (GlcNAc...) asparagine glycan is attached at Asn175. N-linked (GlcNAc...) asparagine glycosylation occurs at Asn316. EGF-like domains lie at 365–401 and 436–473; these read DEKT…SRCE and EISK…ERCE. 5 cysteine pairs are disulfide-bonded: Cys376–Cys389, Cys391–Cys400, Cys440–Cys450, Cys444–Cys461, and Cys463–Cys472. N-linked (GlcNAc...) asparagine glycosylation occurs at Asn475. The chain crosses the membrane as a helical span at residues 535–555; the sequence is VIIVLVLGIVSCFFLVAVIVH. The Cytoplasmic segment spans residues 556-647; the sequence is GFRRLYKPKR…LIHNMDDDLY (92 aa).

The protein belongs to the cueball family.

The protein resides in the cell membrane. In terms of biological role, has a role in spermatogenesis and oogenesis. The polypeptide is Protein cueball (Drosophila persimilis (Fruit fly)).